The following is a 111-amino-acid chain: Translation initiation factor 1A 1 (111 aa).

Residues Met-1 to Thr-26 are disordered. Residues Thr-22 to Thr-96 enclose the S1-like domain.

It belongs to the eIF-1A family.

Its function is as follows. Seems to be required for maximal rate of protein biosynthesis. Enhances ribosome dissociation into subunits and stabilizes the binding of the initiator Met-tRNA(I) to 40 S ribosomal subunits. This chain is Translation initiation factor 1A 1 (eIF1A1), found in Methanosarcina acetivorans (strain ATCC 35395 / DSM 2834 / JCM 12185 / C2A).